A 235-amino-acid chain; its full sequence is Myelin protein zero-like protein 3 (235 aa).

Residues 1-31 (MQQRGAAGSRGCALFPLLGVLFFQGVYIVFS) form the signal peptide. Positions 32–148 (LEIRADAHVR…NIPMTELTVT (117 aa)) constitute an Ig-like V-type domain. Residues 32 to 158 (LEIRADAHVR…ERGFGTMLSS (127 aa)) lie on the Extracellular side of the membrane. Cysteine 52 and cysteine 128 are oxidised to a cystine. A glycan (N-linked (GlcNAc...) asparagine) is linked at asparagine 123. A helical transmembrane segment spans residues 159–179 (VALLSILVFVPSAVVVALLLV). Residues 180–235 (RMGRKAAGLKKRSRSGYKKSSIEVSDDTDQEEEEACMARLCVRCAECLDSDYEETY) lie on the Cytoplasmic side of the membrane.

This sequence belongs to the myelin P0 protein family.

It is found in the membrane. Mediates homophilic cell-cell adhesion. The chain is Myelin protein zero-like protein 3 (MPZL3) from Homo sapiens (Human).